The primary structure comprises 526 residues: NAD(P)H-quinone oxidoreductase chain 4 (526 aa).

13 helical membrane-spanning segments follow: residues 5–25 (FPWLTVIILLPLVAALAVPLI), 32–52 (WYSFAVCLVDFVLMVAAFFTS), 87–107 (LILLTGFITALATLAAWPVTL), 111–131 (MFHFLMLAMLAGMVGVFAVQD), 133–153 (VLFFLFFELELVPVYLMLAIW), 165–185 (FILYTAVGSLFILVVGLAMYF), 211–231 (FLGLLIAYAVKLPIFPLHTWL), 239–259 (TAPVHMLLAGILLKMGGYALI), 273–293 (FAPLLIVLGIVNIIYAALTSF), 302–320 (IAYSSISHMGFVLIGVGSL), 331–351 (QMISHGLIGASLFFLVGATYD), 371–393 (IFAMFTACSMASLALPGMSGFVA), and 414–434 (LVVLFAAFGVILTPIYLLSML).

The protein belongs to the complex I subunit 4 family.

It is found in the cell inner membrane. The catalysed reaction is a plastoquinone + NADH + (n+1) H(+)(in) = a plastoquinol + NAD(+) + n H(+)(out). It catalyses the reaction a plastoquinone + NADPH + (n+1) H(+)(in) = a plastoquinol + NADP(+) + n H(+)(out). In terms of biological role, NDH-1 shuttles electrons from NAD(P)H, via FMN and iron-sulfur (Fe-S) centers, to quinones in the respiratory chain. The immediate electron acceptor for the enzyme in this species is believed to be plastoquinone. Couples the redox reaction to proton translocation (for every two electrons transferred, four hydrogen ions are translocated across the cytoplasmic membrane), and thus conserves the redox energy in a proton gradient. This is NAD(P)H-quinone oxidoreductase chain 4 from Gloeobacter violaceus (strain ATCC 29082 / PCC 7421).